We begin with the raw amino-acid sequence, 131 residues long: Small ribosomal subunit protein uS8 (131 aa).

Belongs to the universal ribosomal protein uS8 family. In terms of assembly, part of the 30S ribosomal subunit. Contacts proteins S5 and S12.

In terms of biological role, one of the primary rRNA binding proteins, it binds directly to 16S rRNA central domain where it helps coordinate assembly of the platform of the 30S subunit. The chain is Small ribosomal subunit protein uS8 from Neorickettsia sennetsu (strain ATCC VR-367 / Miyayama) (Ehrlichia sennetsu).